The primary structure comprises 446 residues: Lysine histidine transporter 1 (446 aa).

Residues 1–37 lie on the Cytoplasmic side of the membrane; the sequence is MVAQAPHDDHQDDEKLAAARQKEIEDWLPITSSRNAK. A helical membrane pass occupies residues 38-58; it reads WWYSAFHNVTAMVGAGVLGLP. The Extracellular portion of the chain corresponds to 59–63; sequence YAMSQ. A helical transmembrane segment spans residues 64–84; the sequence is LGWGPGIAVLVLSWVITLYTL. Topologically, residues 85–115 are cytoplasmic; the sequence is WQMVEMHEMVPGKRFDRYHELGQHAFGEKLG. A helical transmembrane segment spans residues 116-136; that stretch reads LYIVVPQQLIVEIGVCIVYMV. Residues 137-157 lie on the Extracellular side of the membrane; it reads TGGKSLKKFHELVCDDCKPIK. Residues 158-178 form a helical membrane-spanning segment; it reads LTYFIMIFASVHFVLSHLPNF. At 179-180 the chain is on the cytoplasmic side; sequence NS. The chain crosses the membrane as a helical span at residues 181 to 201; it reads ISGVSLAAAVMSLSYSTIAWA. Residues 202 to 227 lie on the Extracellular side of the membrane; it reads SSASKGVQEDVQYGYKAKTTAGTVFN. The chain crosses the membrane as a helical span at residues 228–248; it reads FFSGLGDVAFAYAGHNVVLEI. Over 249–268 the chain is Cytoplasmic; that stretch reads QATIPSTPEKPSKGPMWRGV. Residues 269 to 289 form a helical membrane-spanning segment; the sequence is IVAYIVVALCYFPVALVGYYI. At 290–305 the chain is on the extracellular side; the sequence is FGNGVEDNILMSLKKP. A helical membrane pass occupies residues 306–326; that stretch reads AWLIATANIFVVIHVIGSYQI. Topologically, residues 327-352 are cytoplasmic; it reads YAMPVFDMMETLLVKKLNFRPTTTLR. The helical transmembrane segment at 353-375 threads the bilayer; sequence FFVRNFYVAATMFVGMTFPFFGG. The Extracellular portion of the chain corresponds to 376 to 378; it reads LLA. A helical membrane pass occupies residues 379–401; sequence FFGGFAFAPTTYFLPCVIWLAIY. Residues 402-409 lie on the Cytoplasmic side of the membrane; that stretch reads KPKKYSLS. A helical membrane pass occupies residues 410–430; the sequence is WWANWVCIVFGLFLMVLSPIG. Topologically, residues 431–446 are extracellular; the sequence is GLRTIVIQAKGYKFYS.

The protein belongs to the amino acid/polyamine transporter 2 family. Amino acid/auxin permease (AAAP) (TC 2.A.18.2) subfamily. Expressed in roots, stems, flowers, leaves, siliques and pollen. Found in the tips of roots and in the rhizodermis of emerging roots and in lateral roots. Higher expression in older leaves as compared to joung leaves. Detected first at the hydathodes, then in the epidermis and finally in matures leaves in all mesophyll cells. Not detected in vascular bundles or in seeds.

It localises to the cell membrane. With respect to regulation, inhibited by carbonlycyanide m-chlorophenylhydrazone (CCCP) and DEPC. Functionally, amino acid-proton symporter. Transporter with a broad specificity for histidine, lysine, glutamic acid, alanine, serine, proline and glycine. Involved in both apoplastic transport of amino acids in leaves and their uptake by roots. The protein is Lysine histidine transporter 1 (LHT1) of Arabidopsis thaliana (Mouse-ear cress).